The chain runs to 244 residues: ATP-dependent dethiobiotin synthetase BioD 1 (244 aa).

12–17 (NVGKTV) is an ATP binding site. T16 contributes to the Mg(2+) binding site. K37 is an active-site residue. D68 lines the ATP pocket. The Mg(2+) site is built by D68 and E126. ATP-binding positions include 186-187 (NR), 215-217 (PYL), and E222.

It belongs to the dethiobiotin synthetase family. Homodimer. The cofactor is Mg(2+).

It is found in the cytoplasm. It catalyses the reaction (7R,8S)-7,8-diammoniononanoate + CO2 + ATP = (4R,5S)-dethiobiotin + ADP + phosphate + 3 H(+). It participates in cofactor biosynthesis; biotin biosynthesis; biotin from 7,8-diaminononanoate: step 1/2. Catalyzes a mechanistically unusual reaction, the ATP-dependent insertion of CO2 between the N7 and N8 nitrogen atoms of 7,8-diaminopelargonic acid (DAPA, also called 7,8-diammoniononanoate) to form a ureido ring. This is ATP-dependent dethiobiotin synthetase BioD 1 from Pasteurella multocida (strain Pm70).